Reading from the N-terminus, the 64-residue chain is Large ribosomal subunit protein uL29 (64 aa).

It belongs to the universal ribosomal protein uL29 family.

This chain is Large ribosomal subunit protein uL29, found in Teredinibacter turnerae (strain ATCC 39867 / T7901).